The following is a 161-amino-acid chain: Mediator of RNA polymerase II transcription subunit 10 (161 aa).

Belongs to the Mediator complex subunit 10 family. As to quaternary structure, component of the Mediator complex.

The protein localises to the nucleus. Component of the Mediator complex, a coactivator involved in the regulated transcription of nearly all RNA polymerase II-dependent genes. Mediator functions as a bridge to convey information from gene-specific regulatory proteins to the basal RNA polymerase II transcription machinery. Mediator is recruited to promoters by direct interactions with regulatory proteins and serves as a scaffold for the assembly of a functional preinitiation complex with RNA polymerase II and the general transcription factors. The chain is Mediator of RNA polymerase II transcription subunit 10 (NUT2) from Kluyveromyces lactis (strain ATCC 8585 / CBS 2359 / DSM 70799 / NBRC 1267 / NRRL Y-1140 / WM37) (Yeast).